Consider the following 349-residue polypeptide: tRNA pseudouridine synthase D (349 aa).

Substrate is bound at residue Phe-27. Asp-80 (nucleophile) is an active-site residue. Residue Asn-129 participates in substrate binding. A TRUD domain is found at 155 to 303 (GVPNYFGAQR…VEAARRAMLL (149 aa)). Residue Phe-329 coordinates substrate.

Belongs to the pseudouridine synthase TruD family.

The enzyme catalyses uridine(13) in tRNA = pseudouridine(13) in tRNA. In terms of biological role, responsible for synthesis of pseudouridine from uracil-13 in transfer RNAs. The sequence is that of tRNA pseudouridine synthase D from Escherichia coli O6:K15:H31 (strain 536 / UPEC).